Consider the following 301-residue polypeptide: 2-phosphoglycerate kinase (301 aa).

Positions 2–89 constitute an ATP-cone domain; sequence IRVIEKGDKV…FWRRFRKMKV (88 aa).

This sequence belongs to the 2-phosphoglycerate kinase family. A divalent metal cation is required as a cofactor.

The enzyme catalyses (2R)-2-phosphoglycerate + ATP = (2R)-2,3-bisphosphoglycerate + ADP + H(+). Its pathway is thermoadapter biosynthesis; cyclic 2,3-diphosphoglycerate biosynthesis; cyclic 2,3-diphosphoglycerate from 2-phospho-D-glycerate: step 1/2. Its function is as follows. Catalyzes the phosphorylation of 2-phosphoglycerate to 2,3-diphosphoglycerate. Involved in the biosynthesis of cyclic 2,3-bisphosphoglycerate, a thermoprotectant. In Pyrococcus horikoshii (strain ATCC 700860 / DSM 12428 / JCM 9974 / NBRC 100139 / OT-3), this protein is 2-phosphoglycerate kinase.